The chain runs to 450 residues: Paired box protein Pax-8 (450 aa).

The paired DNA-binding region spans 9 to 135 (GHGGLNQLGG…SSINRIIRTK (127 aa)). The segment at 12–68 (GLNQLGGAFVNGRPLPEVVRQRIVDLAHQGVRPCDISRQLRVSHGCVSKILGRYYET) is PAI subdomain. The interval 87–135 (KVVEKIGDYKRQNPTMFAWEIRDRLLAEGVCDNDTVPSVSSINRIIRTK) is RED subdomain. The segment covering 159–182 (LIPSSAVTPPESPQSDSLGSTYSI) has biased composition (polar residues). Residues 159-222 (LIPSSAVTPP…QSSSSGPRKH (64 aa)) are disordered. At Ser-303 the chain carries Phosphoserine.

In terms of assembly, interacts with WWTR1. As to expression, expressed in the excretory system, thyroid gland and Wilms tumors.

The protein resides in the nucleus. In terms of biological role, transcription factor for the thyroid-specific expression of the genes exclusively expressed in the thyroid cell type, maintaining the functional differentiation of such cells. This Homo sapiens (Human) protein is Paired box protein Pax-8 (PAX8).